Here is a 277-residue protein sequence, read N- to C-terminus: Protein G1-like2 (277 aa).

The segment covering 1 to 16 (MQGGGGGDSSGGGGGE) has biased composition (gly residues). Disordered stretches follow at residues 1-28 (MQGGGGGDSSGGGGGEAPRPSRYESQKR), 141-203 (RGIA…GHFF), and 225-245 (HQVSNAGNGGNTNTNTNTNTG). Basic and acidic residues predominate over residues 19–28 (RPSRYESQKR). In terms of domain architecture, ALOG spans 22-149 (RYESQKRRDW…ARGIAYEKKR (128 aa)). A Nuclear localization signal motif is present at residues 147-151 (KKRRK). The span at 154–177 (PTSSSSSQAAAAAAAATSPASPAA) shows a compositional bias: low complexity. The span at 178-187 (SPTPPPPPPT) shows a compositional bias: pro residues.

Belongs to the plant homeotic and developmental regulators ALOG protein family.

The protein resides in the nucleus. In terms of biological role, probable transcription regulator that acts as a developmental regulator by promoting cell growth in response to light. In Oryza sativa subsp. japonica (Rice), this protein is Protein G1-like2 (G1L2).